Reading from the N-terminus, the 555-residue chain is Cyclin-T1.2 (555 aa).

2 disordered regions span residues 315-429 and 505-555; these read SYKG…NSSK and PADS…GELV. Over residues 321 to 335 the composition is skewed to low complexity; that stretch reads KPLSNSSDSPSTRPS. Basic and acidic residues predominate over residues 341–359; sequence KNQKVVEQELMEQRMKEAA. The segment covering 382–398 has biased composition (low complexity); the sequence is TSSSASNNSNHQNRSSS. Residues 521–543 show a composition bias toward pro residues; sequence PDEPSPPVSQILLPPPPPPPILP.

This sequence belongs to the cyclin family. Cyclin C subfamily.

Its function is as follows. Regulatory subunit of the cyclin-dependent kinase pair (CDK9/cyclin T) complex, also called positive transcription elongation factor B (P-TEFb), which is proposed to facilitate the transition from abortive to production elongation by phosphorylating the CTD (carboxy-terminal domain) of the large subunit of RNA polymerase II (RNAP II). This chain is Cyclin-T1.2 (cit-1.2), found in Caenorhabditis elegans.